The primary structure comprises 699 residues: SPS-sensor serine protease component SSY5 (699 aa).

Disordered stretches follow at residues 1–113 (MVRF…LQGF) and 128–158 (PVKE…ENAR). The propeptide occupies 1–381 (MVRFFGLNKK…YCVKDYIKKA (381 aa)). A compositionally biased stretch (polar residues) spans 24-38 (NEQNAAETSSSNVSG). Residues 39–51 (NEERIDPNSHDTN) are compositionally biased toward basic and acidic residues. Low complexity predominate over residues 61-78 (STTFGSSIQSSSIFSRGR). The segment covering 83 to 93 (TGASSSMATSE) has biased composition (polar residues). Low complexity-rich tracts occupy residues 97 to 109 (HSSG…NSKN) and 144 to 154 (SSSTSSTLATS). The tract at residues 459–699 (FAITCAHVVL…QWDIDPQLDG (241 aa)) is serine protease. Residues H465, D545, and S640 each act as charge relay system in the active site.

It belongs to the peptidase S64 family. As to quaternary structure, component of the plasma membrane SPS (SSY1-PTR3-SSY5) amino acid sensor complex. Post-translationally, the propeptide is autoproteolytically cleaved from the catalytic domain but remains associated, forming an inactive protease complex. This processing occurs even in the absence of signaling.

It localises to the cell membrane. Its function is as follows. Protease component of the SPS-sensor system, which regulates the expression of several amino acid-metabolizing enzymes and amino acid- and peptide-permeases in response to extracellular amino acid levels by controlling the activity of two transcription factors, STP1 and STP2. Catalyzes the activation of these transcription factors, which are synthesized as latent cytoplasmic precursors, by proteolytic removal of an N-terminal inhibitory domain containing cytoplasmic retention motifs. SSY5 binds as an inactive protease complex to STP1. In response to extracellular amino acids and dependent on the other SPS-sensor components, the inhibitory propeptide is induced to dissociate, and thereby enables the catalytic domain to process STP1. In Saccharomyces cerevisiae (strain ATCC 204508 / S288c) (Baker's yeast), this protein is SPS-sensor serine protease component SSY5 (SSY5).